A 558-amino-acid chain; its full sequence is Phosphatidylserine lipase ABHD16A (558 aa).

2 helical membrane-spanning segments follow: residues I60–F80 and V93–L113. At R114–L558 the chain is on the cytoplasmic side. One can recognise an AB hydrolase-1 domain in the interval L281–L407. Active-site charge relay system residues include S355, D430, and H507.

Belongs to the AB hydrolase superfamily. ABHD16 family.

Its subcellular location is the membrane. It catalyses the reaction 1-heptadecanoyl-2-(5Z,8Z,11Z,14Z-eicosatetraenoyl)-sn-glycero-3-phosphoserine + H2O = 1-heptadecanoyl-sn-glycero-3-phosphoserine + (5Z,8Z,11Z,14Z)-eicosatetraenoate + H(+). The enzyme catalyses 1-hexadecanoyl-2-(9Z-octadecenoyl)-sn-glycero-3-phospho-L-serine + H2O = 1-hexadecanoyl-sn-glycero-3-phospho-L-serine + (9Z)-octadecenoate + H(+). The catalysed reaction is 1-octadecanoyl-2-(9Z,12Z-octadecadienoyl)-sn-glycero-3-phosphoserine + H2O = 1-octadecanoyl-sn-glycero-3-phosphoserine + (9Z,12Z)-octadecadienoate + H(+). It carries out the reaction 1-heptadecanoyl-2-(5Z,8Z,11Z,14Z-eicosatetraenoyl)-sn-glycero-3-phosphocholine + H2O = 1-heptadecanoyl-sn-glycero-3-phosphocholine + (5Z,8Z,11Z,14Z)-eicosatetraenoate + H(+). It catalyses the reaction 1-hexadecanoyl-2-(9Z-octadecenoyl)-sn-glycero-3-phosphoglycerol + H2O = 1-hexadecanoyl-sn-glycero-3-phosphoglycerol + (9Z)-octadecenoate + H(+). The enzyme catalyses 1-hexadecanoyl-2-(9Z-octadecenoyl)-sn-glycero-3-phospho-(1D-myo-inositol) + H2O = 1-hexadecanoyl-sn-glycero-3-phospho-(1D-myo-inositol) + (9Z)-octadecenoate + H(+). The catalysed reaction is 1-heptadecanoyl-2-(5Z,8Z,11Z,14Z-eicosatetraenoyl)-sn-glycero-3-phosphoethanolamine + H2O = 1-heptadecanoyl-sn-glycero-3-phosphoethanolamine + (5Z,8Z,11Z,14Z)-eicosatetraenoate + H(+). It carries out the reaction 1-hexadecanoyl-2-(9Z-octadecenoyl)-sn-glycero-3-phospho-(1'-sn-glycerol) + H2O = 1-hexadecanoyl-sn-glycero-3-phospho-(1'-sn-glycerol) + (9Z)-octadecenoate + H(+). It catalyses the reaction Hydrolyzes glycerol monoesters of long-chain fatty acids.. The enzyme catalyses 1-tetradecanoylglycerol + H2O = tetradecanoate + glycerol + H(+). The catalysed reaction is 2-hexadecanoylglycerol + H2O = glycerol + hexadecanoate + H(+). It carries out the reaction 1-(9Z-octadecenoyl)-glycerol + H2O = glycerol + (9Z)-octadecenoate + H(+). It catalyses the reaction 2-(9Z-octadecenoyl)-glycerol + H2O = glycerol + (9Z)-octadecenoate + H(+). The enzyme catalyses 2-(9Z,12Z-octadecadienoyl)-glycerol + H2O = (9Z,12Z)-octadecadienoate + glycerol + H(+). The catalysed reaction is 1-(5Z,8Z,11Z,14Z-eicosatetraenoyl)-glycerol + H2O = glycerol + (5Z,8Z,11Z,14Z)-eicosatetraenoate + H(+). It carries out the reaction 2-(5Z,8Z,11Z,14Z-eicosatetraenoyl)-glycerol + H2O = glycerol + (5Z,8Z,11Z,14Z)-eicosatetraenoate + H(+). It catalyses the reaction prostaglandin D2-1-glycerol ester + H2O = prostaglandin D2 + glycerol + H(+). The enzyme catalyses 2-glyceryl-15-deoxy-Delta(12,14)-prostaglandin J2 + H2O = 15-deoxy-Delta(12,14)-prostaglandin J2 + glycerol + H(+). The catalysed reaction is 1-(9Z,12Z-octadecadienoyl)-glycerol + H2O = (9Z,12Z)-octadecadienoate + glycerol + H(+). Inhibited by beta-lactone-based lipid inhibitors, such as beta-lactone palmostatin-B. Functionally, phosphatidylserine (PS) lipase that mediates the hydrolysis of phosphatidylserine to generate lysophosphatidylserine (LPS). LPS constitutes a class of signaling lipids that regulates immunological and neurological processes. Has no activity towards diacylglycerol, triacylglycerol or lysophosphatidylserine lipase. Also has monoacylglycerol lipase activity, with preference for 1-(9Z,12Z-octadecadienoyl)-glycerol (1-LG) and 2-glyceryl-15-deoxy-Delta(12,14)-prostaglandin J2 (15d-PGJ(2)-G). This chain is Phosphatidylserine lipase ABHD16A, found in Homo sapiens (Human).